The sequence spans 343 residues: Interferon-inducible protein AIM2 (343 aa).

The Pyrin domain occupies Met1 to Lys87. Positions Met138–Ile337 constitute an HIN-200 domain.

Belongs to the HIN-200 family. As to quaternary structure, self-associates; forms homooligomers in response to cytosolic double-stranded DNA (dsDNA) and the dsDNA seems to serve as oligomerization platform. Component of AIM2 inflammasome, which consists of a signal sensor component (AIM2), an adapter (PYCARD/ASC), which recruits an effector pro-inflammatory caspase (CASP1). Interacts (via pyrin domain) with PYCARD/ASC (via pyrin domain); interaction is direct. Component of the AIM2 PANoptosome complex, a multiprotein complex that drives inflammatory cell death (PANoptosis). Interacts with PYDC5; disrupts assembly of the AIM2 inflammasome complex. Interacts with EIF2AK2/PKR. Interacts with MAPRE1. Interacts with IFI16. Interacts with isoform IFI16-beta of IFI16; preventing the interaction between AIM2 and PYCARD/ASC. Interacts with RACK1; promoting association with PP2A phosphatase and dephosphorylation of AKT1. Interacts with TRIM11; promoting AIM2 recruitment to autophagosomes and autophagy-dependent degradation. (Microbial infection) Interacts with human herpesvirus 8 protein SOX/ORF37; this interaction inhibits AIM2 polymerization and subsequent inflammasome activation. Degraded via selective autophagy following interaction with TRIM11. In terms of tissue distribution, expressed in spleen, small intestine, peripheral blood leukocytes, and testis.

It is found in the cytoplasm. The protein localises to the inflammasome. Its subcellular location is the nucleus. Its activity is regulated as follows. Inactive in absence of double-stranded DNA (dsDNA). Homooligomerizes upon binding to dsDNA, dsDNA serving as an oligomerization platform. AIM2 requires large dsDNA to generate a structural template that couples dsDNA ligand-binding and homooligomerization. Homooligomerization is followed by recruitment of PYCARD/ASC to initiate speck formation (nucleation). AIM2 and PYCARD/ASC homooligomer filaments assemble bidirectionally and the recognition between AIM2 and PYCARD/ASC oligomers occurs in a head-to-tail manner. Clustered PYCARD/ASC nucleates the formation of CASP1 filaments through the interaction of their respective CARD domains, acting as a platform for CASP1 polymerization and activation. Active CASP1 then specifically processes protein precursors, such as gasdermin-D (GSDMD), IL1B and IL18, leading to the release of mature cytokines in the extracellular milieu or pyroptosis, depending on cell type. AIM2 can be activated in response to events that cause genomic DNA (HIV protease inhibitor nelfinavir) or mitochondrial DNA release in the cytoplasm (such as Perfluoroalkyl substance pollutants or cholesterol overload). Activation of the AIM2 inflammasome is inhibited by isoform IFI16-beta of IFI16, which prevents the interaction between AIM2 and PYCARD/ASC. Activation of the AIM2 inflammasome is inhibited by TRIM11, which promotes autophagy-dependent degradation of AIM2. Functionally, sensor component of the AIM2 inflammasome, which mediates inflammasome activation in response to the presence of double-stranded DNA (dsDNA) in the cytosol, leading to subsequent pyroptosis. Inflammasomes are supramolecular complexes that assemble in the cytosol in response to pathogens and other damage-associated signals and play critical roles in innate immunity and inflammation. Acts as a recognition receptor (PRR): specifically recognizes and binds dsDNA in the cytosol, and mediates the formation of the inflammasome polymeric complex composed of AIM2, CASP1 and PYCARD/ASC. Recruitment of pro-caspase-1 (proCASP1) to the AIM2 inflammasome promotes caspase-1 (CASP1) activation, which subsequently cleaves and activates inflammatory cytokines IL1B and IL18 and gasdermin-D (GSDMD), promoting cytokine secretion. In some cells, CASP1 activation mediates cleavage and activation of GSDMD, triggering pyroptosis without promoting cytokine secretion. Detects cytosolic dsDNA of viral and bacterial origin in a non-sequence-specific manner. Involved in the DNA damage response caused by acute ionizing radiation by mediating pyroptosis of intestinal epithelial cells and bone marrow cells in response to double-strand DNA breaks. Mechanistically, AIM2 senses DNA damage in the nucleus to mediate inflammasome assembly and inflammatory cell death. Also acts as a regulator of neurodevelopment via its role in the DNA damage response: acts by promoting neural cell death in response to DNA damage in the developing brain, thereby purging genetically compromised cells of the central nervous system. Pyroptosis mediated by the AIM2 inflammasome in response to DNA damage is dependent on GSDMD without involving IL1B and IL18 cytokine secretion. Also acts as a mediator of pyroptosis, necroptosis and apoptosis (PANoptosis), an integral part of host defense against pathogens, in response to bacterial infection. Can also trigger PYCARD/ASC-dependent, caspase-1-independent cell death that involves caspase-8 (CASP8). In terms of biological role, also acts as a tumor suppressor independently of its role in inflammatory response. Able to suppress overt cell proliferation in enterocytes: restricts stem cell proliferation in the intestinal mucosa in an inflammasome-independent manner, contributing to a decrease in the likelihood of colorectal cancer development. AIM2 suppresses cell proliferation by inhibiting phosphorylation of AKT1 at 'Ser-473', preventing AKT1 activation and AKT-mTOR signaling pathway. Inhibits AKT1 phosphorylation both by inhibiting the activity of PRKDC/DNA-PK kinase and promoting dephosphorylation by PP2A phosphatase. Also acts as a key regulator of regulatory T-cells (Treg) homeostasis by promoting their stability: acts by preventing AKT1 activation. Its role in Treg homeostasis is important to restain autoimmune diseases. In Homo sapiens (Human), this protein is Interferon-inducible protein AIM2.